A 230-amino-acid polypeptide reads, in one-letter code: Large ribosomal subunit protein uL1 (230 aa).

The protein belongs to the universal ribosomal protein uL1 family. Part of the 50S ribosomal subunit.

Functionally, binds directly to 23S rRNA. The L1 stalk is quite mobile in the ribosome, and is involved in E site tRNA release. In terms of biological role, protein L1 is also a translational repressor protein, it controls the translation of the L11 operon by binding to its mRNA. This Lactobacillus acidophilus (strain ATCC 700396 / NCK56 / N2 / NCFM) protein is Large ribosomal subunit protein uL1.